The chain runs to 590 residues: Arginine--tRNA ligase (590 aa).

The 'HIGH' region signature appears at 130–140; that stretch reads PNIAKEMHVGH.

It belongs to the class-I aminoacyl-tRNA synthetase family. Monomer.

The protein resides in the cytoplasm. The catalysed reaction is tRNA(Arg) + L-arginine + ATP = L-arginyl-tRNA(Arg) + AMP + diphosphate. The protein is Arginine--tRNA ligase of Synechococcus sp. (strain CC9605).